The following is a 217-amino-acid chain: Large ribosomal subunit protein uL1 (217 aa).

Ser-2 is modified (N-acetylserine). At Tyr-11 the chain carries Phosphotyrosine. 2 positions are modified to N6-acetyllysine: Lys-91 and Lys-106. Lys-118 bears the N6-acetyllysine; alternate mark. Residue Lys-118 forms a Glycyl lysine isopeptide (Lys-Gly) (interchain with G-Cter in SUMO1); alternate linkage. Lys-118 is covalently cross-linked (Glycyl lysine isopeptide (Lys-Gly) (interchain with G-Cter in SUMO2); alternate).

This sequence belongs to the universal ribosomal protein uL1 family. Component of the large ribosomal subunit.

The protein localises to the cytoplasm. Functionally, component of the large ribosomal subunit. The ribosome is a large ribonucleoprotein complex responsible for the synthesis of proteins in the cell. In Macaca fascicularis (Crab-eating macaque), this protein is Large ribosomal subunit protein uL1 (RPL10A).